A 201-amino-acid chain; its full sequence is Histone-like protein HC2 (201 aa).

The interval 1-69 (MLGVQKKCST…VAKKATAKKA (69 aa)) is disordered. Composition is skewed to basic residues over residues 8–50 (CSTR…KTVA) and 59–69 (PVAKKATAKKA).

The protein belongs to the histone H1/H5 family. HCT subfamily.

Functionally, might have a role in establishing the nucleoid structure of elementary bodies. In Chlamydia trachomatis serovar D (strain ATCC VR-885 / DSM 19411 / UW-3/Cx), this protein is Histone-like protein HC2 (hctB).